Consider the following 711-residue polypeptide: Polyribonucleotide nucleotidyltransferase (711 aa).

Residues Asp486 and Asp492 each contribute to the Mg(2+) site. The KH domain occupies 553-612 (PRIHTIKINPDKIKDVIGKGGSVIRALTEETGTTIEIEDDGTVKIAATDGDKAQHAIRRI). The S1 motif domain maps to 622–690 (GRIYNGKVTR…RQGRVRLSIK (69 aa)). A disordered region spans residues 689 to 711 (IKEATEQTPSAAAPEAPAAEQGE). A compositionally biased stretch (low complexity) spans 694-711 (EQTPSAAAPEAPAAEQGE).

Belongs to the polyribonucleotide nucleotidyltransferase family. In terms of assembly, component of the RNA degradosome, which is a multiprotein complex involved in RNA processing and mRNA degradation. It depends on Mg(2+) as a cofactor.

It localises to the cytoplasm. It carries out the reaction RNA(n+1) + phosphate = RNA(n) + a ribonucleoside 5'-diphosphate. Functionally, involved in mRNA degradation. Catalyzes the phosphorolysis of single-stranded polyribonucleotides processively in the 3'- to 5'-direction. This is Polyribonucleotide nucleotidyltransferase from Klebsiella pneumoniae subsp. pneumoniae (strain ATCC 700721 / MGH 78578).